A 103-amino-acid polypeptide reads, in one-letter code: Small ribosomal subunit protein uS10 (103 aa).

It belongs to the universal ribosomal protein uS10 family. In terms of assembly, part of the 30S ribosomal subunit.

In terms of biological role, involved in the binding of tRNA to the ribosomes. The chain is Small ribosomal subunit protein uS10 from Jannaschia sp. (strain CCS1).